The primary structure comprises 121 residues: ATP synthase epsilon chain (121 aa).

This sequence belongs to the ATPase epsilon chain family. As to quaternary structure, F-type ATPases have 2 components, CF(1) - the catalytic core - and CF(0) - the membrane proton channel. CF(1) has five subunits: alpha(3), beta(3), gamma(1), delta(1), epsilon(1). CF(0) has three main subunits: a, b and c.

It localises to the cell membrane. In terms of biological role, produces ATP from ADP in the presence of a proton gradient across the membrane. The chain is ATP synthase epsilon chain from Mycobacterium leprae (strain Br4923).